The following is a 215-amino-acid chain: Cytochrome b6 (215 aa).

The chain crosses the membrane as a helical span at residues 32–52 (IFYCLGGITLTCFLVQVATGF). Cys-35 contributes to the heme c binding site. The heme b site is built by His-86 and His-100. The next 3 helical transmembrane spans lie at 90 to 110 (ASMM…TGGF), 116 to 136 (LTWV…VTGY), and 186 to 206 (LHTF…FLMI). The heme b site is built by His-187 and His-202.

Belongs to the cytochrome b family. PetB subfamily. As to quaternary structure, the 4 large subunits of the cytochrome b6-f complex are cytochrome b6, subunit IV (17 kDa polypeptide, PetD), cytochrome f and the Rieske protein, while the 4 small subunits are PetG, PetL, PetM and PetN. The complex functions as a dimer. The cofactor is heme b. Heme c is required as a cofactor.

The protein localises to the plastid. It is found in the chloroplast thylakoid membrane. Component of the cytochrome b6-f complex, which mediates electron transfer between photosystem II (PSII) and photosystem I (PSI), cyclic electron flow around PSI, and state transitions. The sequence is that of Cytochrome b6 from Gossypium barbadense (Sea Island cotton).